A 186-amino-acid chain; its full sequence is Dihydrofolate reductase (186 aa).

Residues 3–184 (PLNCIVAVSQ…IKYKFEVYEK (182 aa)) form the DHFR domain. NADP(+) contacts are provided by residues A9 and 15–21 (GIGKNGD). 30-35 (EYKYFQ) contacts substrate. At K32 the chain carries N6-acetyllysine; alternate. Residue K32 is modified to N6-succinyllysine; alternate. Residue 54 to 56 (RKT) coordinates NADP(+). R70 contributes to the substrate binding site. Residues 76 to 78 (SRE) and 116 to 123 (GGSSVYKE) contribute to the NADP(+) site. C162 carries the cysteine derivative; partial modification.

Belongs to the dihydrofolate reductase family. As to quaternary structure, homodimer.

It is found in the mitochondrion. The protein localises to the cytoplasm. It catalyses the reaction (6S)-5,6,7,8-tetrahydrofolate + NADP(+) = 7,8-dihydrofolate + NADPH + H(+). It functions in the pathway cofactor biosynthesis; tetrahydrofolate biosynthesis; 5,6,7,8-tetrahydrofolate from 7,8-dihydrofolate: step 1/1. Its function is as follows. Key enzyme in folate metabolism. Contributes to the de novo mitochondrial thymidylate biosynthesis pathway. Catalyzes an essential reaction for de novo glycine and purine synthesis, and for DNA precursor synthesis. Binds its own mRNA and that of DHFR2. The chain is Dihydrofolate reductase (DHFR) from Sus scrofa (Pig).